Consider the following 668-residue polypeptide: MAAERSRSPVDSPVPASMFAPEPSSPGAARAAAAAARLHGGFDSDCSEDGEALNGEPELDLTSKLVLVSPTSEQYDSLLRQMWERMDEGCGETIYVIGQGSDGTEYGLSEADMEASYATVKSMAEQIEADVILLRERQEAGGRVRDYLVRKRVGDNDFLEVRVAVVGNVDAGKSTLLGVLTHGELDNGRGFARQKLFRHKHEIESGRTSSVGNDILGFDSEGNVVNKPDSHGGSLEWTKICEKSSKVITFIDLAGHEKYLKTTVFGMTGHLPDFCMLMVGSNAGIVGMTKEHLGLALALNVPVFVVVTKIDMCPANILQETLKLLQRLLKSPGCRKIPVLVQSKDDVIVTASNFSSERMCPIFQISNVTGENLDLLKMFLNLLSPRTSYREEEPAEFQIDDTYSVPGVGTVVSGTTLRGLIKLNDTLLLGPDPLGNFLSIAVKSIHRKRMPVKEVRGGQTASFALKKIKRSSIRKGMVMVSPRLNPQASWEFEAEILVLHHPTTISPRYQAMVHCGSIRQTATILSMDKDCLRTGDKATVHFRFIKTPEYLHIDQRLVFREGRTKAVGTITKLLQTTNNSPMNSKPQQIKMQSTKKGPLSKREEGGPCGVPAAGGPPTGDEASSLGTAQAASTSGLQPQPKPSSGGRRRGGQRHKVKSGACVTPASGC.

Positions 1–32 (MAAERSRSPVDSPVPASMFAPEPSSPGAARAA) are disordered. Residues Ser-6, Ser-8, Ser-12, Ser-24, Ser-25, Ser-44, Ser-47, and Ser-69 each carry the phosphoserine modification. Residues 158-389 (FLEVRVAVVG…LNLLSPRTSY (232 aa)) form the tr-type G domain. The interval 167-174 (GNVDAGKS) is G1. 167 to 174 (GNVDAGKS) provides a ligand contact to GTP. Positions 206–210 (GRTSS) are G2. Residues 252-255 (DLAG) are G3. GTP is bound by residues 252 to 256 (DLAGH) and 308 to 311 (TKID). The tract at residues 308-311 (TKID) is G4. Positions 366–368 (SNV) are G5. Residues 573–595 (LLQTTNNSPMNSKPQQIKMQSTK) show a composition bias toward polar residues. Residues 573–668 (LLQTTNNSPM…GACVTPASGC (96 aa)) form a disordered region. At Ser-580 the chain carries Phosphoserine. Low complexity predominate over residues 609 to 619 (GVPAAGGPPTG). Residues 624–637 (SLGTAQAASTSGLQ) show a composition bias toward polar residues. The span at 646-657 (GRRRGGQRHKVK) shows a compositional bias: basic residues.

Belongs to the TRAFAC class translation factor GTPase superfamily. Classic translation factor GTPase family. GTPBP1 subfamily. As to quaternary structure, interacts with EXOSC2/RRP4, EXOSC3/RRP40, EXOSC5/RRP46, HNRNPD, HNRNPR and SYNCRIP. Identified in a complex with AANAT mRNA, but does not bind mRNA by itself. In terms of tissue distribution, detected in some neurons in the brain cortex. Detected in small arteries, dendritic cells and macrophages in the thymus. Detected in lung bronchi, in bronchial epithelial cells and in bronchial smooth muscle cells. Detected in smooth muscle cells in a broad range of organs (at protein level). Expressed in brain, thymus, lung, and kidney.

Its subcellular location is the cytoplasm. In terms of biological role, promotes degradation of target mRNA species. Plays a role in the regulation of circadian mRNA stability. Binds GTP and has GTPase activity. The polypeptide is GTP-binding protein 1 (Gtpbp1) (Mus musculus (Mouse)).